Here is a 1059-residue protein sequence, read N- to C-terminus: Carbamoyl phosphate synthase large chain (1059 aa).

Positions 1-401 (MPKRTDIKKI…SLLKACRSLE (401 aa)) are carboxyphosphate synthetic domain. 12 residues coordinate ATP: R129, R169, G175, G176, R208, I210, E215, G241, I242, H243, Q284, and E298. The ATP-grasp 1 domain occupies 133-327 (KQLMEDLEQP…IAKLAAKIAV (195 aa)). The Mg(2+) site is built by Q284, E298, and N300. Residues Q284, E298, and N300 each contribute to the Mn(2+) site. The segment at 402–546 (IGVYHNEMPE…YSTYEWENES (145 aa)) is oligomerization domain. The carbamoyl phosphate synthetic domain stretch occupies residues 547–929 (IKSEKESVIV…ALYKAFEASY (383 aa)). Residues 671–861 (EQALKDLNIP…MAQIATKLIL (191 aa)) enclose the ATP-grasp 2 domain. Positions 707, 746, 748, 752, 777, 778, 779, 780, 820, and 832 each coordinate ATP. The Mg(2+) site is built by Q820, E832, and N834. Residues Q820, E832, and N834 each contribute to the Mn(2+) site. Residues 930-1059 (FHLPAFGNVI…ESRGFITQAI (130 aa)) form the MGS-like domain. The segment at 930 to 1059 (FHLPAFGNVI…ESRGFITQAI (130 aa)) is allosteric domain.

Belongs to the CarB family. Composed of two chains; the small (or glutamine) chain promotes the hydrolysis of glutamine to ammonia, which is used by the large (or ammonia) chain to synthesize carbamoyl phosphate. Tetramer of heterodimers (alpha,beta)4. Mg(2+) is required as a cofactor. Mn(2+) serves as cofactor.

It catalyses the reaction hydrogencarbonate + L-glutamine + 2 ATP + H2O = carbamoyl phosphate + L-glutamate + 2 ADP + phosphate + 2 H(+). The enzyme catalyses hydrogencarbonate + NH4(+) + 2 ATP = carbamoyl phosphate + 2 ADP + phosphate + 2 H(+). Its pathway is amino-acid biosynthesis; L-arginine biosynthesis; carbamoyl phosphate from bicarbonate: step 1/1. The protein operates within pyrimidine metabolism; UMP biosynthesis via de novo pathway; (S)-dihydroorotate from bicarbonate: step 1/3. Its function is as follows. Large subunit of the glutamine-dependent carbamoyl phosphate synthetase (CPSase). CPSase catalyzes the formation of carbamoyl phosphate from the ammonia moiety of glutamine, carbonate, and phosphate donated by ATP, constituting the first step of 2 biosynthetic pathways, one leading to arginine and/or urea and the other to pyrimidine nucleotides. The large subunit (synthetase) binds the substrates ammonia (free or transferred from glutamine from the small subunit), hydrogencarbonate and ATP and carries out an ATP-coupled ligase reaction, activating hydrogencarbonate by forming carboxy phosphate which reacts with ammonia to form carbamoyl phosphate. This chain is Carbamoyl phosphate synthase large chain, found in Streptococcus mutans serotype c (strain ATCC 700610 / UA159).